The chain runs to 217 residues: tRNA (guanine-N(7)-)-methyltransferase (217 aa).

Positions 44, 69, 96, and 118 each coordinate S-adenosyl-L-methionine. D118 is a catalytic residue. Substrate contacts are provided by residues K122, D154, and 191–194 (TEYE).

The protein belongs to the class I-like SAM-binding methyltransferase superfamily. TrmB family.

It carries out the reaction guanosine(46) in tRNA + S-adenosyl-L-methionine = N(7)-methylguanosine(46) in tRNA + S-adenosyl-L-homocysteine. Its pathway is tRNA modification; N(7)-methylguanine-tRNA biosynthesis. Its function is as follows. Catalyzes the formation of N(7)-methylguanine at position 46 (m7G46) in tRNA. This is tRNA (guanine-N(7)-)-methyltransferase from Bacillus cytotoxicus (strain DSM 22905 / CIP 110041 / 391-98 / NVH 391-98).